A 405-amino-acid polypeptide reads, in one-letter code: Protein NCA1 (405 aa).

A disordered region spans residues 1–85 (MTTTSVCPFS…GNLNKDSTDS (85 aa)). Basic and acidic residues-rich tracts occupy residues 13–24 (ARPDDGSTRKQG) and 37–48 (ARPDDASARKQG). Over residues 76 to 85 (GNLNKDSTDS) the composition is skewed to polar residues. Residues 108-142 (CMLCQALLYESSRCVPCTHVFCKVCLTRFKDCPLC) form an RING-type zinc finger. TPR repeat units follow at residues 247–280 (GAVLGMLGDCSRAMGDSSSAVKHFEESVEFLMKL) and 292–325 (SVSLNKIGDLKYYDEDLQAARSYYDRALNVRRDA).

As to quaternary structure, interacts with the catalases CAT1, CAT2 and CAT3. This interaction is not induced by alkaline stress or H(2)O(2) and NaCl treatments. Expressed in roots, stems, leaves, flowers and siliques.

It is found in the cytoplasm. The protein resides in the nucleus. Its function is as follows. Has holdase chaperone activity that may fold catalase to a functional structure. Not required for the peroxisome import of catalases. Required for the activity of catalases and acts mainly at the post-transcriptional level. This Arabidopsis thaliana (Mouse-ear cress) protein is Protein NCA1.